An 887-amino-acid chain; its full sequence is Alanine--tRNA ligase (887 aa).

Zn(2+)-binding residues include His-581, His-585, Cys-683, and His-687.

It belongs to the class-II aminoacyl-tRNA synthetase family. Zn(2+) serves as cofactor.

The protein localises to the cytoplasm. It carries out the reaction tRNA(Ala) + L-alanine + ATP = L-alanyl-tRNA(Ala) + AMP + diphosphate. In terms of biological role, catalyzes the attachment of alanine to tRNA(Ala) in a two-step reaction: alanine is first activated by ATP to form Ala-AMP and then transferred to the acceptor end of tRNA(Ala). Also edits incorrectly charged Ser-tRNA(Ala) and Gly-tRNA(Ala) via its editing domain. This chain is Alanine--tRNA ligase, found in Ehrlichia canis (strain Jake).